Consider the following 381-residue polypeptide: Anhydro-N-acetylmuramic acid kinase (381 aa).

22–29 contributes to the ATP binding site; the sequence is GTSIDGID.

Belongs to the anhydro-N-acetylmuramic acid kinase family.

The catalysed reaction is 1,6-anhydro-N-acetyl-beta-muramate + ATP + H2O = N-acetyl-D-muramate 6-phosphate + ADP + H(+). It participates in amino-sugar metabolism; 1,6-anhydro-N-acetylmuramate degradation. It functions in the pathway cell wall biogenesis; peptidoglycan recycling. Functionally, catalyzes the specific phosphorylation of 1,6-anhydro-N-acetylmuramic acid (anhMurNAc) with the simultaneous cleavage of the 1,6-anhydro ring, generating MurNAc-6-P. Is required for the utilization of anhMurNAc either imported from the medium or derived from its own cell wall murein, and thus plays a role in cell wall recycling. The polypeptide is Anhydro-N-acetylmuramic acid kinase (Xylella fastidiosa (strain Temecula1 / ATCC 700964)).